The chain runs to 595 residues: Indole-3-acetic acid-amido synthetase GH3.3 (595 aa).

This sequence belongs to the IAA-amido conjugating enzyme family.

In terms of biological role, catalyzes the synthesis of indole-3-acetic acid (IAA)-amino acid conjugates, providing a mechanism for the plant to cope with the presence of excess auxin. Strongly reactive with Glu, Gln, Trp, Asp, Ala, Leu, Phe, Gly, Tyr, Met, Ile and Val. Little or no product formation with His, Ser, Thr, Arg, Lys, or Cys. Also active on pyruvic and butyric acid analogs of IAA, PAA and the synthetic auxin naphthaleneacetic acid (NAA). The two chlorinated synthetic auxin herbicides 2,4-D and 3,6-dichloro-o-anisic acid (dicamba) cannot be used as substrates. The polypeptide is Indole-3-acetic acid-amido synthetase GH3.3 (GH3.3) (Arabidopsis thaliana (Mouse-ear cress)).